Consider the following 280-residue polypeptide: NAD kinase (280 aa).

The active-site Proton acceptor is Asp-67. NAD(+) contacts are provided by residues 67-68 (DG), Arg-72, 138-139 (ND), Asp-167, Ala-175, 178-183 (TAYSLS), and Gln-237.

It belongs to the NAD kinase family. A divalent metal cation serves as cofactor.

The protein resides in the cytoplasm. The enzyme catalyses NAD(+) + ATP = ADP + NADP(+) + H(+). Its function is as follows. Involved in the regulation of the intracellular balance of NAD and NADP, and is a key enzyme in the biosynthesis of NADP. Catalyzes specifically the phosphorylation on 2'-hydroxyl of the adenosine moiety of NAD to yield NADP. The polypeptide is NAD kinase (Aeropyrum pernix (strain ATCC 700893 / DSM 11879 / JCM 9820 / NBRC 100138 / K1)).